Here is a 235-residue protein sequence, read N- to C-terminus: 1-(5-phosphoribosyl)-5-[(5-phosphoribosylamino)methylideneamino] imidazole-4-carboxamide isomerase (235 aa).

The Proton acceptor role is filled by Asp8. Residue Asp129 is the Proton donor of the active site.

Belongs to the HisA/HisF family.

It localises to the cytoplasm. It catalyses the reaction 1-(5-phospho-beta-D-ribosyl)-5-[(5-phospho-beta-D-ribosylamino)methylideneamino]imidazole-4-carboxamide = 5-[(5-phospho-1-deoxy-D-ribulos-1-ylimino)methylamino]-1-(5-phospho-beta-D-ribosyl)imidazole-4-carboxamide. The protein operates within amino-acid biosynthesis; L-histidine biosynthesis; L-histidine from 5-phospho-alpha-D-ribose 1-diphosphate: step 4/9. This Thermoanaerobacter sp. (strain X514) protein is 1-(5-phosphoribosyl)-5-[(5-phosphoribosylamino)methylideneamino] imidazole-4-carboxamide isomerase.